The sequence spans 376 residues: Putative endoglucanase type K (376 aa).

The N-terminal stretch at 1–18 (MRSYTLLALAGPLAVSAA) is a signal peptide. A catalytic region spans residues 19–308 (SGSGHSTRYW…ATKPAQPVNK (290 aa)). The active-site Nucleophile is Asp-29. The active-site Proton donor is the Asp-140. Residues 229–332 (AFKGDTSASK…SCPAKTDATA (104 aa)) are disordered. 2 stretches are compositionally biased toward low complexity: residues 235 to 258 (SASK…AQPQ) and 291 to 306 (KPVA…AQPV). The linker stretch occupies residues 309–338 (PKTTQKVRGTKTRGSCPAKTDATAKASVVP). A CBM1 domain is found at 335-374 (SVVPAYYQCGGSKSAYPNGNLACATGSKCVKQNEYYSQCV).

Belongs to the glycosyl hydrolase 45 (cellulase K) family.

It carries out the reaction Endohydrolysis of (1-&gt;4)-beta-D-glucosidic linkages in cellulose, lichenin and cereal beta-D-glucans.. The sequence is that of Putative endoglucanase type K from Fusarium oxysporum (Fusarium vascular wilt).